The chain runs to 96 residues: Small ribosomal subunit protein bS6 (96 aa).

It belongs to the bacterial ribosomal protein bS6 family.

Its function is as follows. Binds together with bS18 to 16S ribosomal RNA. The chain is Small ribosomal subunit protein bS6 from Streptococcus uberis (strain ATCC BAA-854 / 0140J).